A 235-amino-acid chain; its full sequence is Glycerol-3-phosphate acyltransferase (235 aa).

Transmembrane regions (helical) follow at residues 4–24, 56–76, 94–114, 125–145, 152–172, and 191–211; these read LLAI…IMAG, SVTL…VAFF, LLAG…GFKG, LIGI…LTVW, VASI…KYVF, and FHDS…LAIL.

Belongs to the PlsY family. In terms of assembly, probably interacts with PlsX.

The protein resides in the cell inner membrane. It catalyses the reaction an acyl phosphate + sn-glycerol 3-phosphate = a 1-acyl-sn-glycero-3-phosphate + phosphate. The protein operates within lipid metabolism; phospholipid metabolism. Functionally, catalyzes the transfer of an acyl group from acyl-phosphate (acyl-PO(4)) to glycerol-3-phosphate (G3P) to form lysophosphatidic acid (LPA). This enzyme utilizes acyl-phosphate as fatty acyl donor, but not acyl-CoA or acyl-ACP. The sequence is that of Glycerol-3-phosphate acyltransferase from Chlorobium luteolum (strain DSM 273 / BCRC 81028 / 2530) (Pelodictyon luteolum).